The sequence spans 490 residues: Probable cytosol aminopeptidase (490 aa).

2 residues coordinate Mn(2+): Lys-255 and Asp-260. Lys-267 is a catalytic residue. Mn(2+)-binding residues include Asp-278, Asp-337, and Glu-339. Arg-341 is an active-site residue.

The protein belongs to the peptidase M17 family. Mn(2+) is required as a cofactor.

Its subcellular location is the cytoplasm. It carries out the reaction Release of an N-terminal amino acid, Xaa-|-Yaa-, in which Xaa is preferably Leu, but may be other amino acids including Pro although not Arg or Lys, and Yaa may be Pro. Amino acid amides and methyl esters are also readily hydrolyzed, but rates on arylamides are exceedingly low.. The enzyme catalyses Release of an N-terminal amino acid, preferentially leucine, but not glutamic or aspartic acids.. Presumably involved in the processing and regular turnover of intracellular proteins. Catalyzes the removal of unsubstituted N-terminal amino acids from various peptides. The chain is Probable cytosol aminopeptidase from Gluconobacter oxydans (strain 621H) (Gluconobacter suboxydans).